The chain runs to 216 residues: MAFDRQKLVEAVKEAKARAKPRNFTQTVEMAVNLKDVDLRKPENRFKLEVVLPHGRGKEPKIAVIADGAVAEAAKKLGLDVISGEELEELAKSPRQARKLAKKYDFFIAAAPLMPKIGRYLGRYLGPRNKMPVVVPPTMTNLEPIVEKLKKTVRIQLKNNPVVHAPIGTEDMDDEKLAENAEAVLNAIINKLERGENQVKSVYIKTTMGPAVKVER.

It belongs to the universal ribosomal protein uL1 family. As to quaternary structure, part of the 50S ribosomal subunit.

Functionally, binds directly to 23S rRNA. Probably involved in E site tRNA release. In terms of biological role, protein L1 is also a translational repressor protein, it controls the translation of its operon by binding to its mRNA. The chain is Large ribosomal subunit protein uL1 from Thermococcus kodakarensis (strain ATCC BAA-918 / JCM 12380 / KOD1) (Pyrococcus kodakaraensis (strain KOD1)).